A 126-amino-acid chain; its full sequence is MVFNKFVQVGRVVYINYGADKGKLAVIVNIINQNRILIDGEHIVRQVIPIRRVHLTKFQIDNVELNQRTVLLKKKIAKFDLTKKYAETSFAKKQAIKTKRANLGDFDRFRVMVLKKKLARTSAKSK.

This sequence belongs to the eukaryotic ribosomal protein eL14 family.

In Tetrahymena thermophila (strain SB210), this protein is Large ribosomal subunit protein eL14 (RPL14).